The following is a 103-amino-acid chain: Urease subunit beta (103 aa).

The protein belongs to the urease beta subunit family. In terms of assembly, heterotrimer of UreA (gamma), UreB (beta) and UreC (alpha) subunits. Three heterotrimers associate to form the active enzyme.

The protein resides in the cytoplasm. The catalysed reaction is urea + 2 H2O + H(+) = hydrogencarbonate + 2 NH4(+). It participates in nitrogen metabolism; urea degradation; CO(2) and NH(3) from urea (urease route): step 1/1. This chain is Urease subunit beta, found in Blochmanniella floridana.